The sequence spans 66 residues: Photosystem II reaction center protein J (66 aa).

Residues 37–57 (LWLVATAGGMAVIFVVGLFFY) form a helical membrane-spanning segment.

This sequence belongs to the PsbJ family. In terms of assembly, PSII is composed of 1 copy each of membrane proteins PsbA, PsbB, PsbC, PsbD, PsbE, PsbF, PsbH, PsbI, PsbJ, PsbK, PsbL, PsbM, PsbT, PsbX, PsbY, PsbZ, Psb30/Ycf12, peripheral proteins PsbO, CyanoQ (PsbQ), PsbU, PsbV and a large number of cofactors. It forms dimeric complexes.

It is found in the cellular thylakoid membrane. One of the components of the core complex of photosystem II (PSII). PSII is a light-driven water:plastoquinone oxidoreductase that uses light energy to abstract electrons from H(2)O, generating O(2) and a proton gradient subsequently used for ATP formation. It consists of a core antenna complex that captures photons, and an electron transfer chain that converts photonic excitation into a charge separation. This Synechococcus sp. (strain CC9311) protein is Photosystem II reaction center protein J.